The sequence spans 230 residues: Ephrin-A3 (230 aa).

An N-terminal signal peptide occupies residues 1 to 22 (MAAAPLLLLLLLVPVPLLPLLA). The 132-residue stretch at 30 to 161 (GNRHAVYWNS…RMKVFVCCAS (132 aa)) folds into the Ephrin RBD domain. N-linked (GlcNAc...) asparagine glycans are attached at residues Asn-38, Asn-67, Asn-84, and Asn-92. Intrachain disulfides connect Cys-63/Cys-102 and Cys-91/Cys-150. The GPI-anchor amidated glycine moiety is linked to residue Gly-206. A propeptide spans 207–230 (TSPKREHLPLAVGIAFFLMTLLAS) (removed in mature form).

This sequence belongs to the ephrin family. In terms of assembly, interacts with EPHA8; activates EPHA8. As to expression, expressed in myogenic progenitor cells.

It is found in the cell membrane. Its function is as follows. Cell surface GPI-bound ligand for Eph receptors, a family of receptor tyrosine kinases which are crucial for migration, repulsion and adhesion during neuronal, vascular and epithelial development. Binds promiscuously Eph receptors residing on adjacent cells, leading to contact-dependent bidirectional signaling into neighboring cells. The signaling pathway downstream of the receptor is referred to as forward signaling while the signaling pathway downstream of the ephrin ligand is referred to as reverse signaling. This is Ephrin-A3 (Efna3) from Mus musculus (Mouse).